The primary structure comprises 59 residues: Large ribosomal subunit protein uL30 (59 aa).

This sequence belongs to the universal ribosomal protein uL30 family. As to quaternary structure, part of the 50S ribosomal subunit.

The protein is Large ribosomal subunit protein uL30 of Macrococcus caseolyticus (strain JCSC5402) (Macrococcoides caseolyticum).